A 361-amino-acid chain; its full sequence is Monodechloroaminopyrrolnitrin synthase PrnB (361 aa).

222–225 provides a ligand contact to substrate; that stretch reads PGAV. Histidine 313 is a binding site for heme. Residues tyrosine 321 and serine 332 each contribute to the substrate site.

Belongs to the PrnB family. In terms of assembly, monomer. It depends on heme b as a cofactor.

The catalysed reaction is 7-chloro-L-tryptophan + AH2 + O2 = monodechloroaminopyrrolnitrin + A + CO2 + 2 H2O. It functions in the pathway antibiotic biosynthesis. In terms of biological role, involved in the biosynthesis of the antifungal antibiotic pyrrolnitrin. Catalyzes the ring rearrangement and decarboxylation to convert 7-chloro-L-tryptophan (7-CLT) to monodechloroaminopyrrolnitrin (MDA). It can also use 7-chloro-D-tryptophan, but 7-chloro-L-tryptophan is the preferred natural enantiomer. In Pseudomonas fluorescens, this protein is Monodechloroaminopyrrolnitrin synthase PrnB (prnB).